Here is a 294-residue protein sequence, read N- to C-terminus: Non-selective voltage-gated ion channel VDAC2 (294 aa).

An N-acetylalanine modification is found at alanine 2. The ATP site is built by lysine 23 and lysine 31. Lysine 31 is subject to N6-acetyllysine; alternate. N6-succinyllysine; alternate is present on lysine 31. Lysine 31 participates in a covalent cross-link: Glycyl lysine isopeptide (Lys-Gly) (interchain with G-Cter in ubiquitin); alternate. The next 2 membrane-spanning stretches (beta stranded) occupy residues 37–46 (LVKLDVKTKS) and 50–58 (VEFSTSGSS). Lysine 64 is covalently cross-linked (Glycyl lysine isopeptide (Lys-Gly) (interchain with G-Cter in ubiquitin)). The beta stranded transmembrane segment at 65 to 75 (VTGTLETKYKW) threads the bilayer. Residue tyrosine 78 is modified to Phosphotyrosine. Transmembrane regions (beta stranded) follow at residues 80-87 (LTFTEKWN), 91-100 (TLGTEIAIED), and 106-115 (LKLTFDTTFS). A Phosphothreonine modification is found at threonine 118. Lysine 120 carries the post-translational modification N6-acetyllysine; alternate. Lysine 120 is covalently cross-linked (Glycyl lysine isopeptide (Lys-Gly) (interchain with G-Cter in ubiquitin); alternate). A Glycyl lysine isopeptide (Lys-Gly) (interchain with G-Cter in ubiquitin) cross-link involves residue lysine 121. A run of 4 beta stranded transmembrane segments spans residues 122–131 (SGKIKSSYKR), 134–141 (INLGCDVD), 148–156 (AIHGSAVFG), and 161–169 (LAGYQMTFD). A Glycyl lysine isopeptide (Lys-Gly) (interchain with G-Cter in ubiquitin) cross-link involves residue lysine 172. 6 consecutive transmembrane segments (beta stranded) span residues 174–186 (KLTRNNFAVGYRT), 189–196 (FQLHTNVN), 200–209 (EFGGSIYQKV), 213–222 (LDTSVNLAWT), 229–238 (RFGIAAKYQL), and 242–249 (ASISAKVN). Serine 251 is subject to Phosphoserine. NAD(+) contacts are provided by residues 253-255 (LIG) and 271-275 (SALVD). 2 beta stranded membrane passes run 253–262 (LIGVGYTQTL) and 265–274 (GVKLTLSALV). Lysine 277 carries the post-translational modification N6-acetyllysine; alternate. Lysine 277 is covalently cross-linked (Glycyl lysine isopeptide (Lys-Gly) (interchain with G-Cter in ubiquitin); alternate). The beta stranded transmembrane segment at 284–293 (HKLGLALELE) threads the bilayer.

The protein belongs to the eukaryotic mitochondrial porin family. In terms of assembly, monomer, homodimer and higher order oligomers; formation of higher order structures is necessary for scramblase activity. Interacts with ARMC12 in a TBC1D21-dependent manner. Interacts with KLC3. Interacts with SPATA33. Interacts with PPP3CC in a SPATA33-dependent manner. Ubiquitinated by PRKN during mitophagy, leading to its degradation and enhancement of mitophagy. Deubiquitinated by USP30.

The protein localises to the mitochondrion outer membrane. It localises to the membrane. It catalyses the reaction chloride(in) = chloride(out). The catalysed reaction is K(+)(in) = K(+)(out). It carries out the reaction a 1,2-diacyl-sn-glycero-3-phospho-L-serine(in) = a 1,2-diacyl-sn-glycero-3-phospho-L-serine(out). The enzyme catalyses a 1,2-diacyl-sn-glycero-3-phosphocholine(in) = a 1,2-diacyl-sn-glycero-3-phosphocholine(out). It catalyses the reaction a 1,2-diacyl-sn-glycero-3-phospho-(1D-myo-inositol)(in) = a 1,2-diacyl-sn-glycero-3-phospho-(1D-myo-inositol)(out). Its function is as follows. Non-selective voltage-gated ion channel that mediates the transport of anions and cations through the mitochondrion outer membrane and plasma membrane. The channel adopts an open conformation at zero mV and a closed conformation at both positive and negative potentials. There are two populations of channels; the main that functions in a lower open-state conductance with lower ion selectivity, that switch, in a voltage-dependent manner, from the open to a low-conducting 'closed' state and the other that has a normal ion selectivity in the typical high conductance, 'open' state. Binds various lipids, including the sphingolipid ceramide, the phospholipid phosphatidylcholine, and the sterols cholesterol and oxysterol. Binding of ceramide promotes the mitochondrial outer membrane permeabilization (MOMP) apoptotic pathway. Functionally, catalyzes the scrambling of phospholipids across the outer mitochondrial membrane; the mechanism is unrelated to channel activity and is capable of translocating both anionic and zwitterionic phospholipids. The chain is Non-selective voltage-gated ion channel VDAC2 from Oryctolagus cuniculus (Rabbit).